Here is a 101-residue protein sequence, read N- to C-terminus: NAD(P)H-quinone oxidoreductase subunit 4L, chloroplastic (101 aa).

The next 3 helical transmembrane spans lie at 2–22 (MFEH…YGLI), 32–52 (ICLE…SDLF), and 61–81 (IFAI…LSIL).

The protein belongs to the complex I subunit 4L family. NDH is composed of at least 16 different subunits, 5 of which are encoded in the nucleus.

It is found in the plastid. Its subcellular location is the chloroplast thylakoid membrane. It catalyses the reaction a plastoquinone + NADH + (n+1) H(+)(in) = a plastoquinol + NAD(+) + n H(+)(out). The catalysed reaction is a plastoquinone + NADPH + (n+1) H(+)(in) = a plastoquinol + NADP(+) + n H(+)(out). Its function is as follows. NDH shuttles electrons from NAD(P)H:plastoquinone, via FMN and iron-sulfur (Fe-S) centers, to quinones in the photosynthetic chain and possibly in a chloroplast respiratory chain. The immediate electron acceptor for the enzyme in this species is believed to be plastoquinone. Couples the redox reaction to proton translocation, and thus conserves the redox energy in a proton gradient. In Oryza nivara (Indian wild rice), this protein is NAD(P)H-quinone oxidoreductase subunit 4L, chloroplastic.